We begin with the raw amino-acid sequence, 347 residues long: MANIQGGQQIGTNQGKGQSAADKLALFLKVFGGEVLTAFARTSVTMPRHMLRSIASGKSAQFPVIGRTKAAYLKPGENLDDKRKDIKHTEKVIHIDGLLTADVLIYDIEDAMNHYDVRAEYTAQLGESLAMAADGAVLAELAGLVNLPDGSNENIEGLGKPTVLTLVKPTTGSLTDPVELGKAIIAQLTIARASLTKNYVPAADRTFYTTPDNYSAILAALMPNAANYQALLDPERGTIRNVMGFEVVEVPHLTAGGAGDTREDAPADQKHAFPATSSTTVKVALDNVVGLFQHRSAVGTVKLKDLALERARRANYQADQIIAKYAMGHGGLRPEAAGAIVLPKVSE.

The protein belongs to the T7virus major capsid protein family. As to quaternary structure, homohexamer. Interacts with the connector protein and the minor capsid protein. Interacts with the capsid assembly scaffolding protein; capsid proteins and scaffolding proteins form building blocks that assemble to form the procapsid, each hexamer of the major capsid protein interacting with 2 scaffolding proteins.

The protein localises to the virion. Its function is as follows. Assembles with the minor capsid protein to form an icosahedral capsid with a T=7 symmetry, about 60 nm in diameter, and consisting of 415 capsid proteins. The major and minor capsid proteins are incorporated into the capsid in about a 90/10 ratio respectively. Once the capsid formed, encapsidates one single copy of the viral genome. The protein is Major capsid protein (10) of Escherichia coli (Bacteriophage T3).